The chain runs to 468 residues: UDP-N-acetylmuramate--L-alanine ligase (468 aa).

112–118 provides a ligand contact to ATP; it reads GTHGKTT.

This sequence belongs to the MurCDEF family.

The protein localises to the cytoplasm. The enzyme catalyses UDP-N-acetyl-alpha-D-muramate + L-alanine + ATP = UDP-N-acetyl-alpha-D-muramoyl-L-alanine + ADP + phosphate + H(+). It functions in the pathway cell wall biogenesis; peptidoglycan biosynthesis. Cell wall formation. This is UDP-N-acetylmuramate--L-alanine ligase from Bordetella pertussis (strain Tohama I / ATCC BAA-589 / NCTC 13251).